The sequence spans 343 residues: Selenide, water dikinase (343 aa).

Sec-15 is an active-site residue. Position 15 (Sec-15) is a non-standard amino acid, selenocysteine. ATP contacts are provided by residues Lys-18 and 45-47; that span reads TAD. Residue Asp-48 participates in Mg(2+) binding. ATP is bound by residues Asp-65, Asp-88, and 135–137; that span reads GHT. Asp-88 serves as a coordination point for Mg(2+). Asp-223 is a binding site for Mg(2+).

This sequence belongs to the selenophosphate synthase 1 family. Class I subfamily. As to quaternary structure, homodimer. Mg(2+) is required as a cofactor.

It catalyses the reaction hydrogenselenide + ATP + H2O = selenophosphate + AMP + phosphate + 2 H(+). Synthesizes selenophosphate from selenide and ATP. The sequence is that of Selenide, water dikinase from Carboxydothermus hydrogenoformans (strain ATCC BAA-161 / DSM 6008 / Z-2901).